A 129-amino-acid chain; its full sequence is Small ribosomal subunit protein uS11 (129 aa).

This sequence belongs to the universal ribosomal protein uS11 family. As to quaternary structure, part of the 30S ribosomal subunit. Interacts with proteins S7 and S18. Binds to IF-3.

Located on the platform of the 30S subunit, it bridges several disparate RNA helices of the 16S rRNA. Forms part of the Shine-Dalgarno cleft in the 70S ribosome. This chain is Small ribosomal subunit protein uS11, found in Bacillus anthracis (strain A0248).